A 125-amino-acid polypeptide reads, in one-letter code: Glycine cleavage system H protein (125 aa).

Residues 22–103 (VFVVGITENA…AFTAWIFKIK (82 aa)) enclose the Lipoyl-binding domain. Lys63 is subject to N6-lipoyllysine.

The protein belongs to the GcvH family. In terms of assembly, the glycine cleavage system is composed of four proteins: P, T, L and H. (R)-lipoate serves as cofactor.

The glycine cleavage system catalyzes the degradation of glycine. The H protein shuttles the methylamine group of glycine from the P protein to the T protein. The polypeptide is Glycine cleavage system H protein (Bordetella avium (strain 197N)).